The chain runs to 417 residues: Glucose-1-phosphate adenylyltransferase (417 aa).

Alpha-D-glucose 1-phosphate-binding positions include Y98, G163, 178-179, and S197; that span reads EK.

The protein belongs to the bacterial/plant glucose-1-phosphate adenylyltransferase family. Homotetramer.

It catalyses the reaction alpha-D-glucose 1-phosphate + ATP + H(+) = ADP-alpha-D-glucose + diphosphate. It functions in the pathway glycan biosynthesis; glycogen biosynthesis. Involved in the biosynthesis of ADP-glucose, a building block required for the elongation reactions to produce glycogen. Catalyzes the reaction between ATP and alpha-D-glucose 1-phosphate (G1P) to produce pyrophosphate and ADP-Glc. The chain is Glucose-1-phosphate adenylyltransferase from Koribacter versatilis (strain Ellin345).